We begin with the raw amino-acid sequence, 710 residues long: MDNWNSVRNVSSDRQTSKTSENPPHTSNEYSGKPEFINLSPDLEENLDEKLMSAFPGLEPHVFQHSQSPLSHKDASLLATMPSVASSNPSLISSGSSQTGSPSQSLSSNKEPSSPGISPSNDSQSQNTNHTSISANPYVNNPSHTSRNPDSGSSLNTASHEVPSSKSDVNVQMLARLKSKSRQKISSSDPLEDLRLTLTECLNPINIVQAPKECAAILVNLMSNITQDDQKLVFLDLLKSKVGNSIYSQLVDGGRKLFLPKLRNWFVSAIRSKHDELIHLILLVLANLPLTTEKLAEVKFGKPILIVKKKSTNSVIRQLAENLSELAEKSFTIEQNRENEKSSTKNDSTVSSSAVVMAPAGPAMAPSASNKPSASSTTKSSNSKSKKKVTSISGTSFFKNLASSTKPTSASSSTKAPLTKQQTNPSTPLSSIMAGLKGREKEKDKDSGISSENVSNNREELPSFRKRSSSSRQSEEIASLQAENAVFSSDPASNDEKTGNKKRKKKSVSWKPDNDLVQVKFIESLNEEGAASVKTPHIYGNARDMDRQEARVAFGSHVEDDVENEIIWYKPVPIKFEISKDEIHPRGYKCGGNERNLTPEATSEIEREKNESKDISTFNIILDLPVIREFDDSRPPAHIKLVSSDTQATTELGFNGLVQQVSENNTNAYSATSNSQLSSIFSNLSSSISDASSNVLQNPSLSIPNYSNAI.

Residues 1-30 (MDNWNSVRNVSSDRQTSKTSENPPHTSNEY) show a composition bias toward polar residues. Disordered stretches follow at residues 1–42 (MDNW…LSPD), 85–170 (ASSN…SDVN), and 361–510 (GPAM…SVSW). Positions 86 to 108 (SSNPSLISSGSSQTGSPSQSLSS) are enriched in low complexity. Residues 109–170 (NKEPSSPGIS…EVPSSKSDVN (62 aa)) are compositionally biased toward polar residues. Low complexity-rich tracts occupy residues 361 to 383 (GPAM…SSNS) and 401 to 420 (LASS…PLTK). Residues 421–430 (QQTNPSTPLS) show a composition bias toward polar residues. The segment covering 437-447 (KGREKEKDKDS) has biased composition (basic and acidic residues).

In terms of assembly, component of the cleavage and polyadenylation factor (CPF) complex.

The protein resides in the cytoplasm. It localises to the nucleus. Its function is as follows. RNA-binding component of the cleavage and polyadenylation factor (CPF) complex, which plays a key role in polyadenylation-dependent pre-mRNA 3'-end formation. Involved in poly(A) site recognition. May be involved in coupling transcription termination and mRNA 3'-end formation. In Schizosaccharomyces pombe (strain 972 / ATCC 24843) (Fission yeast), this protein is Cleavage and polyadenylation factor complex subunit C74.02c.